Consider the following 576-residue polypeptide: Formate--tetrahydrofolate ligase 1 (576 aa).

69 to 76 contacts ATP; the sequence is TPLGEGKT.

The protein belongs to the formate--tetrahydrofolate ligase family.

It carries out the reaction (6S)-5,6,7,8-tetrahydrofolate + formate + ATP = (6R)-10-formyltetrahydrofolate + ADP + phosphate. It participates in one-carbon metabolism; tetrahydrofolate interconversion. This chain is Formate--tetrahydrofolate ligase 1, found in Rubrobacter xylanophilus (strain DSM 9941 / JCM 11954 / NBRC 16129 / PRD-1).